Consider the following 242-residue polypeptide: Required for respiratory growth protein 7, mitochondrial (242 aa).

This sequence belongs to the RRG7 family.

The protein localises to the mitochondrion. In Saccharomyces cerevisiae (strain ATCC 204508 / S288c) (Baker's yeast), this protein is Required for respiratory growth protein 7, mitochondrial (RRG7).